The primary structure comprises 300 residues: B1 kinase (300 aa).

In terms of domain architecture, Protein kinase spans 16–282 (WVVGPLIGKG…ITMVNSLTYF (267 aa)). ATP contacts are provided by residues 22–30 (IGKGGFGSI) and Lys-45. Asp-147 serves as the catalytic Proton acceptor.

It belongs to the protein kinase superfamily. Ser/Thr protein kinase family. Poxviruses subfamily. In terms of assembly, interacts with host JIP1; this interaction increases the amount of MAPK bound to JIP1 and subsequently increases the activity of transcription factors, such as JUN, that respond to these complexes. Interacts with protein OPG198; this interaction inhibits the repressive activity of OPG198 pseudokinase on viral replication factory formation. The cofactor is Mg(2+). Post-translationally, autophosphorylated.

The protein resides in the virion. It is found in the host cytoplasm. It carries out the reaction L-seryl-[protein] + ATP = O-phospho-L-seryl-[protein] + ADP + H(+). The catalysed reaction is L-threonyl-[protein] + ATP = O-phospho-L-threonyl-[protein] + ADP + H(+). In terms of biological role, essential serine/threonine-protein kinase that plays different role in the viral life cycle. Phosphorylates the host small ribosomal protein RACK1 thereby customizing the ribosomes to a state optimal for viral mRNAs (which contain poly-A leaders) but not for host mRNAs. Facilitates viral DNA replication by inhibiting host BANF1, a cellular host defense responsive to foreign DNA. Phosphorylates host BANF1 on serine and threonine residues; this leads to BANF1 relocalization to the cytoplasm, loss of dimerization and impaired DNA binding activity. Indeed, BANF1 activity depends on its DNA-binding property which is blocked by VPK1-mediated phosphorylation. Required for viral intermediate genes expression, probably by inhibiting host BANF1. Modulates cellular responses via host JUN by two different mechanisms, either by direct phosphorylation or by modulation of upstream JIP1-MAPK complexes. Seems to participate in the accumulation/processing of late proteins and thus in virion maturation. In addition, inhibits B12 repressive activity on viral DNA replication via a phosphorylation-dependent mechanism. The chain is B1 kinase (OPG187) from Homo sapiens (Human).